We begin with the raw amino-acid sequence, 295 residues long: MDIITGSMTALITPFKNGKVDLQKYESLIKRQIAQGINAVSPVGTTGESATLSHKEHKECIEVAVATCKNSGVKVLAGAGSNATHEACDIAKFAQEVGADGILSIAPYYNKPTQEGLYQHYKAIANSVELPLMLYNVPGRTGVDLLPETAIRLFDDVKNIYGIKEATGSLERATSLMSARKDFVVVSGDDSVDFPMLASGARGIISVTSNLLPNLKSKLVSSVLEGDYKTSLSIHNDLYELNKTLFCESNPIPIKAAMYLSGLLDSLEFRLPLTNPSAETMQKLEKILIKYEVIK.

Residue Thr-46 participates in pyruvate binding. Tyr-135 functions as the Proton donor/acceptor in the catalytic mechanism. Lys-164 serves as the catalytic Schiff-base intermediate with substrate. Pyruvate is bound at residue Ile-205.

This sequence belongs to the DapA family. As to quaternary structure, homotetramer; dimer of dimers.

The protein localises to the cytoplasm. It catalyses the reaction L-aspartate 4-semialdehyde + pyruvate = (2S,4S)-4-hydroxy-2,3,4,5-tetrahydrodipicolinate + H2O + H(+). The protein operates within amino-acid biosynthesis; L-lysine biosynthesis via DAP pathway; (S)-tetrahydrodipicolinate from L-aspartate: step 3/4. Its function is as follows. Catalyzes the condensation of (S)-aspartate-beta-semialdehyde [(S)-ASA] and pyruvate to 4-hydroxy-tetrahydrodipicolinate (HTPA). This is 4-hydroxy-tetrahydrodipicolinate synthase from Aliarcobacter butzleri (strain RM4018) (Arcobacter butzleri).